The chain runs to 504 residues: MEEFQGYLELDRFRQHDFLYPFIFREYSYALAHGHGLNRYMLLENIGYDNKSSLLIVKRLITTMYQQNYLIISANDSKKNPFFGYNKNLHSKILSEGFAIIVEIPFYLRLISSLEGAEIVRFYNLRSIHSIFPFLEEKFPHLNYSADILIPYPAHLEILVQTLRYRVKDASYLHLLRFFLHEYSNCNSLIITNKSISIFSKSNPRFFLFLYNSYLCEYESIFLFLRNQSSHLRLTSSGVLFERLCLYRKIEHFAEVFANDFPVIPCFLKDPFMHYVRYQGKSILASKDTPLLMNKWKSYLVNLWQCHFDVWSHAASIRINQLSKHSLDFLSYFSSVRRNPAVVRNQMLENSFLLNNAPNKLDTIVPIIPLIGSLAKAKFCNAVGHPISKLTRADLSDFEIINRFLHICRNLSHYYSGSSKKKNMYRIKYILRLSCVKTLARKHKSTARAFLKRVDSEFFQEFFTEEGGFISLIFPRASFALRRLYSGRVWYLDIIFINGLSNHE.

It belongs to the intron maturase 2 family. MatK subfamily.

The protein localises to the plastid. The protein resides in the chloroplast. Usually encoded in the trnK tRNA gene intron. Probably assists in splicing its own and other chloroplast group II introns. The polypeptide is Maturase K (Quercus suber (Cork oak)).